Reading from the N-terminus, the 186-residue chain is Ribosome-recycling factor (186 aa).

The protein belongs to the RRF family.

The protein localises to the cytoplasm. Its function is as follows. Responsible for the release of ribosomes from messenger RNA at the termination of protein biosynthesis. May increase the efficiency of translation by recycling ribosomes from one round of translation to another. The sequence is that of Ribosome-recycling factor from Pediococcus pentosaceus (strain ATCC 25745 / CCUG 21536 / LMG 10740 / 183-1w).